We begin with the raw amino-acid sequence, 133 residues long: Nucleoside diphosphate kinase (133 aa).

The ATP site is built by K9, F57, R85, T91, R102, and N112. Catalysis depends on H115, which acts as the Pros-phosphohistidine intermediate.

This sequence belongs to the NDK family. The cofactor is Mg(2+).

The protein localises to the cytoplasm. It carries out the reaction a 2'-deoxyribonucleoside 5'-diphosphate + ATP = a 2'-deoxyribonucleoside 5'-triphosphate + ADP. The enzyme catalyses a ribonucleoside 5'-diphosphate + ATP = a ribonucleoside 5'-triphosphate + ADP. Its function is as follows. Major role in the synthesis of nucleoside triphosphates other than ATP. The ATP gamma phosphate is transferred to the NDP beta phosphate via a ping-pong mechanism, using a phosphorylated active-site intermediate. This Methanococcus maripaludis (strain DSM 14266 / JCM 13030 / NBRC 101832 / S2 / LL) protein is Nucleoside diphosphate kinase.